The chain runs to 869 residues: Protein translocase subunit SecA (869 aa).

Residues Q85, 103–107, and D508 each bind ATP; that span reads GEGKT.

This sequence belongs to the SecA family. Monomer and homodimer. Part of the essential Sec protein translocation apparatus which comprises SecA, SecYEG and auxiliary proteins SecDF. Other proteins may also be involved.

It localises to the cell membrane. It is found in the cytoplasm. The catalysed reaction is ATP + H2O + cellular proteinSide 1 = ADP + phosphate + cellular proteinSide 2.. Functionally, part of the Sec protein translocase complex. Interacts with the SecYEG preprotein conducting channel. Has a central role in coupling the hydrolysis of ATP to the transfer of proteins into and across the cell membrane, serving as an ATP-driven molecular motor driving the stepwise translocation of polypeptide chains across the membrane. This Deinococcus deserti (strain DSM 17065 / CIP 109153 / LMG 22923 / VCD115) protein is Protein translocase subunit SecA.